We begin with the raw amino-acid sequence, 89 residues long: Class I hydrophobin C (89 aa).

A signal peptide spans 1–16 (MKFSLATIALAAAVAA). 4 cysteine pairs are disulfide-bonded: cysteine 28–cysteine 68, cysteine 39–cysteine 60, cysteine 40–cysteine 52, and cysteine 69–cysteine 85. Residue asparagine 36 is glycosylated (N-linked (GlcNAc...) asparagine).

The protein belongs to the fungal hydrophobin family.

The protein resides in the secreted. Its subcellular location is the cell wall. The protein localises to the vacuole. It localises to the cytoplasmic vesicle. Its function is as follows. Aerial growth, conidiation, and dispersal of filamentous fungi in the environment rely upon a capability of their secreting small amphipathic proteins called hydrophobins (HPBs) with low sequence identity. Class I can self-assemble into an outermost layer of rodlet bundles on aerial cell surfaces, conferring cellular hydrophobicity that supports fungal growth, development and dispersal; whereas Class II form highly ordered films at water-air interfaces through intermolecular interactions but contribute nothing to the rodlet structure. Hyd1C contributes to certain cell wall-related features, such as hydrophobicity but is not involved in cell wall-related events during fungal proliferation in host hemocoel. Does not contribute to conidial hydrophobicity. The polypeptide is Class I hydrophobin C (Beauveria bassiana (strain ARSEF 2860) (White muscardine disease fungus)).